Reading from the N-terminus, the 57-residue chain is Conotoxin reg3.17 (57 aa).

Positions 1-16 are cleaved as a signal peptide; the sequence is TICLLLFPLTVVPLDG. Residues 17-44 constitute a propeptide that is removed on maturation; it reads DQPAHQPAVRKHNIKSAVQLRQWDEEQQ. Disulfide bonds link C45/C57, C46/C53, and C50/C56.

This sequence belongs to the conotoxin M superfamily. In terms of tissue distribution, expressed by the venom duct.

The protein localises to the secreted. The polypeptide is Conotoxin reg3.17 (Conus regius (Crown cone)).